The chain runs to 312 residues: Protoheme IX farnesyltransferase (312 aa).

The next 9 helical transmembrane spans lie at 29-49 (VMSL…GHMN), 50-70 (PVLA…SGAL), 90-110 (IPAG…LSAF), 117-137 (LMVN…YAVV), 150-170 (IVIG…AATG), 177-197 (VVLF…LSLF), 223-243 (ALFY…LGFA), 248-268 (GAIS…MWVA), and 292-312 (LFAV…FGGF).

Belongs to the UbiA prenyltransferase family. Protoheme IX farnesyltransferase subfamily.

It is found in the cell inner membrane. It catalyses the reaction heme b + (2E,6E)-farnesyl diphosphate + H2O = Fe(II)-heme o + diphosphate. Its pathway is porphyrin-containing compound metabolism; heme O biosynthesis; heme O from protoheme: step 1/1. In terms of biological role, converts heme B (protoheme IX) to heme O by substitution of the vinyl group on carbon 2 of heme B porphyrin ring with a hydroxyethyl farnesyl side group. This is Protoheme IX farnesyltransferase from Brucella anthropi (strain ATCC 49188 / DSM 6882 / CCUG 24695 / JCM 21032 / LMG 3331 / NBRC 15819 / NCTC 12168 / Alc 37) (Ochrobactrum anthropi).